Consider the following 418-residue polypeptide: Serine hydroxymethyltransferase (418 aa).

Residues L121 and 125 to 127 (GHL) each bind (6S)-5,6,7,8-tetrahydrofolate. Position 230 is an N6-(pyridoxal phosphate)lysine (K230). 355-357 (SPF) provides a ligand contact to (6S)-5,6,7,8-tetrahydrofolate.

The protein belongs to the SHMT family. Homodimer. It depends on pyridoxal 5'-phosphate as a cofactor.

It localises to the cytoplasm. It carries out the reaction (6R)-5,10-methylene-5,6,7,8-tetrahydrofolate + glycine + H2O = (6S)-5,6,7,8-tetrahydrofolate + L-serine. It functions in the pathway one-carbon metabolism; tetrahydrofolate interconversion. The protein operates within amino-acid biosynthesis; glycine biosynthesis; glycine from L-serine: step 1/1. Its function is as follows. Catalyzes the reversible interconversion of serine and glycine with tetrahydrofolate (THF) serving as the one-carbon carrier. This reaction serves as the major source of one-carbon groups required for the biosynthesis of purines, thymidylate, methionine, and other important biomolecules. Also exhibits THF-independent aldolase activity toward beta-hydroxyamino acids, producing glycine and aldehydes, via a retro-aldol mechanism. The chain is Serine hydroxymethyltransferase from Streptococcus pyogenes serotype M6 (strain ATCC BAA-946 / MGAS10394).